Reading from the N-terminus, the 321-residue chain is Urease accessory protein UreD (321 aa).

It belongs to the UreD family. UreD, UreF and UreG form a complex that acts as a GTP-hydrolysis-dependent molecular chaperone, activating the urease apoprotein by helping to assemble the nickel containing metallocenter of UreC. The UreE protein probably delivers the nickel.

It is found in the cytoplasm. Its function is as follows. Required for maturation of urease via the functional incorporation of the urease nickel metallocenter. This chain is Urease accessory protein UreD, found in Photorhabdus laumondii subsp. laumondii (strain DSM 15139 / CIP 105565 / TT01) (Photorhabdus luminescens subsp. laumondii).